Here is a 367-residue protein sequence, read N- to C-terminus: 2-aminoethylphosphonate--pyruvate transaminase (367 aa).

An N6-(pyridoxal phosphate)lysine modification is found at K193.

Belongs to the class-V pyridoxal-phosphate-dependent aminotransferase family. PhnW subfamily. Homodimer. Pyridoxal 5'-phosphate is required as a cofactor.

It carries out the reaction (2-aminoethyl)phosphonate + pyruvate = phosphonoacetaldehyde + L-alanine. Involved in phosphonate degradation. The chain is 2-aminoethylphosphonate--pyruvate transaminase from Vibrio vulnificus (strain CMCP6).